The following is a 649-amino-acid chain: DNA topoisomerase 3 (649 aa).

Residues 1 to 134 (MRLFIAEKPS…KRQQVRRCLI (134 aa)) form the Toprim domain. Positions 7, 103, and 105 each coordinate Mg(2+). The Topo IA-type catalytic domain occupies 155–603 (FVPLCVSALA…PLVGTLYQLI (449 aa)). An interaction with DNA region spans residues 194–199 (SVGRVQ). Y328 serves as the catalytic O-(5'-phospho-DNA)-tyrosine intermediate. The tract at residues 614-649 (FRGIVAPGGGDKKKSAPRKRAGKKSPPAAETGRQTE) is disordered.

It belongs to the type IA topoisomerase family. Mg(2+) serves as cofactor.

The catalysed reaction is ATP-independent breakage of single-stranded DNA, followed by passage and rejoining.. Releases the supercoiling and torsional tension of DNA, which is introduced during the DNA replication and transcription, by transiently cleaving and rejoining one strand of the DNA duplex. Introduces a single-strand break via transesterification at a target site in duplex DNA. The scissile phosphodiester is attacked by the catalytic tyrosine of the enzyme, resulting in the formation of a DNA-(5'-phosphotyrosyl)-enzyme intermediate and the expulsion of a 3'-OH DNA strand. The free DNA strand then undergoes passage around the unbroken strand, thus removing DNA supercoils. Finally, in the religation step, the DNA 3'-OH attacks the covalent intermediate to expel the active-site tyrosine and restore the DNA phosphodiester backbone. In Salmonella typhimurium (strain LT2 / SGSC1412 / ATCC 700720), this protein is DNA topoisomerase 3.